The chain runs to 149 residues: Large ribosomal subunit protein bL9 (149 aa).

Belongs to the bacterial ribosomal protein bL9 family. In terms of assembly, part of the 50S ribosomal subunit. In stalled/collided disomes (pairs of ribosomes where the leading ribosome is stalled and a second ribosome has collided with it), bL9 in the collided ribosome contacts bS6 and uL2, while it contacts only helices of the 16S rRNA in the stalled ribosome; the inter-ribosome bridge thus formed is different from that formed between normally translating ribosomes.

Functionally, binds to the 23S rRNA. The sequence is that of Large ribosomal subunit protein bL9 from Bacillus subtilis (strain 168).